The following is a 436-amino-acid chain: GTPase Der (436 aa).

EngA-type G domains lie at 3–168 (PLIA…PESD) and 177–352 (IRLA…QNRS). GTP contacts are provided by residues 9–16 (GRPNVGKS), 56–60 (DTGGY), 120–123 (NKAE), 183–190 (GRPNVGKS), 230–234 (DTAGL), and 295–298 (NKWD). The region spanning 353-436 (RKISTSALNR…VTISLRFMQK (84 aa)) is the KH-like domain.

It belongs to the TRAFAC class TrmE-Era-EngA-EngB-Septin-like GTPase superfamily. EngA (Der) GTPase family. As to quaternary structure, associates with the 50S ribosomal subunit.

In terms of biological role, GTPase that plays an essential role in the late steps of ribosome biogenesis. This chain is GTPase Der, found in Chlorobium luteolum (strain DSM 273 / BCRC 81028 / 2530) (Pelodictyon luteolum).